We begin with the raw amino-acid sequence, 597 residues long: Phosphomethylpyrimidine synthase (597 aa).

Substrate contacts are provided by residues Asn-207, Met-236, Tyr-265, His-301, 321–323, 362–365, and Glu-401; these read SRG and DGLR. His-405 contacts Zn(2+). Residue Tyr-428 participates in substrate binding. Residue His-469 coordinates Zn(2+). The [4Fe-4S] cluster site is built by Cys-549, Cys-552, and Cys-557.

Belongs to the ThiC family. As to quaternary structure, homodimer. Requires [4Fe-4S] cluster as cofactor.

It catalyses the reaction 5-amino-1-(5-phospho-beta-D-ribosyl)imidazole + S-adenosyl-L-methionine = 4-amino-2-methyl-5-(phosphooxymethyl)pyrimidine + CO + 5'-deoxyadenosine + formate + L-methionine + 3 H(+). It functions in the pathway cofactor biosynthesis; thiamine diphosphate biosynthesis. Its function is as follows. Catalyzes the synthesis of the hydroxymethylpyrimidine phosphate (HMP-P) moiety of thiamine from aminoimidazole ribotide (AIR) in a radical S-adenosyl-L-methionine (SAM)-dependent reaction. The protein is Phosphomethylpyrimidine synthase of Gluconobacter oxydans (strain 621H) (Gluconobacter suboxydans).